A 2160-amino-acid chain; its full sequence is Autophagy-related protein 2 (2160 aa).

Polar residues-rich tracts occupy residues 100–116, 153–168, and 292–306; these read SFSTAKDGNPNSRSPSK, AITSRSQMLQRTSASI, and TTPVQPKSSEPSSRI. Disordered stretches follow at residues 100 to 130, 142 to 174, 288 to 317, 347 to 371, 401 to 519, 657 to 689, 715 to 739, and 953 to 978; these read SFSTAKDGNPNSRSPSKAGTHDSSSDHILPT, EPKEEKEELQAAITSRSQMLQRTSASISDDEEE, PASPTTPVQPKSSEPSSRIPSPLPGHTPDA, RMEGSAYTYDGRFSDADTDAEDRSD, LHDD…DFAN, DRRHTDETVHSSDLNLASDSPKDSTVHSGHSSA, FEGTLPRSLPRQGKKADHDPISKSQ, and FSTAKNMQRDSPRRARGVHFESSPPP. Over residues 404-414 the composition is skewed to acidic residues; it reads DDLEPPEDLVP. The span at 415 to 425 shows a compositional bias: low complexity; it reads QDDQFPPSSAT. Residues 439 to 451 show a composition bias toward polar residues; it reads TSPSGIDTEQTAP. Positions 483–497 are enriched in low complexity; that stretch reads SHSASSPSGSLPSRE. Residues 500-517 show a composition bias toward polar residues; it reads NRQTAPPSESGSIGSSDF. A compositionally biased stretch (basic and acidic residues) spans 657-666; sequence DRRHTDETVH.

The protein belongs to the ATG2 family.

Its subcellular location is the preautophagosomal structure membrane. The protein localises to the endoplasmic reticulum membrane. It catalyses the reaction a 1,2-diacyl-sn-glycero-3-phosphocholine(in) = a 1,2-diacyl-sn-glycero-3-phosphocholine(out). The catalysed reaction is a 1,2-diacyl-sn-glycero-3-phospho-L-serine(in) = a 1,2-diacyl-sn-glycero-3-phospho-L-serine(out). The enzyme catalyses a 1,2-diacyl-sn-glycero-3-phosphoethanolamine(in) = a 1,2-diacyl-sn-glycero-3-phosphoethanolamine(out). Lipid transfer protein required for autophagosome completion and peroxisome degradation. Tethers the edge of the isolation membrane (IM) to the endoplasmic reticulum (ER) and mediates direct lipid transfer from ER to IM for IM expansion. Atg2 binds to the ER exit site (ERES), which is the membrane source for autophagosome formation, using basic residues in its N-terminal region (NR) and to the expanding edge of the IM through its C-terminal region. The latter binding is assisted by an atg18-PtdIns3P interaction. Atg2 then extracts phospholipids from the membrane source using its NR and transfers them to atg9 to the IM through its predicted beta-sheet-rich structure for membrane expansion. The polypeptide is Autophagy-related protein 2 (atg2) (Aspergillus fumigatus (strain ATCC MYA-4609 / CBS 101355 / FGSC A1100 / Af293) (Neosartorya fumigata)).